Consider the following 31-residue polypeptide: ACSRAGENCYKSGRCCDGLYCKAYVVTCYKP.

Disulfide bonds link Cys-2-Cys-16, Cys-9-Cys-21, and Cys-15-Cys-28.

In terms of tissue distribution, expressed by the venom gland.

It is found in the secreted. Its function is as follows. Insecticidal toxin that induces reversible paralysis in crickets but not in cockroaches and mice. Molecular target unknown. The sequence is that of U1-theraphotoxin-Cv1a from Coremiocnemis valida (Singapore tarantula).